The following is a 1404-amino-acid chain: DNA-directed RNA polymerase subunit beta' (1404 aa).

Positions 70, 72, 85, and 88 each coordinate Zn(2+). Residues D460, D462, and D464 each contribute to the Mg(2+) site. Zn(2+) is bound by residues C814, C888, C895, and C898.

The protein belongs to the RNA polymerase beta' chain family. The RNAP catalytic core consists of 2 alpha, 1 beta, 1 beta' and 1 omega subunit. When a sigma factor is associated with the core the holoenzyme is formed, which can initiate transcription. Mg(2+) is required as a cofactor. Requires Zn(2+) as cofactor.

It catalyses the reaction RNA(n) + a ribonucleoside 5'-triphosphate = RNA(n+1) + diphosphate. Functionally, DNA-dependent RNA polymerase catalyzes the transcription of DNA into RNA using the four ribonucleoside triphosphates as substrates. This is DNA-directed RNA polymerase subunit beta' from Shewanella piezotolerans (strain WP3 / JCM 13877).